The following is a 331-amino-acid chain: Septin homolog spn2 (331 aa).

In terms of domain architecture, Septin-type G spans 29-301 (RGFQFNVMVV…EKFRFKQLSS (273 aa)). The tract at residues 39 to 46 (GPSGSGKS) is G1 motif. Residues 39-46 (GPSGSGKS), Thr-73, Gly-99, 179-187 (KSDSLTLEE), Gly-235, and Arg-250 each bind GTP. A G3 motif region spans residues 96–99 (DTPG). A G4 motif region spans residues 178 to 181 (AKSD). The tract at residues 311 to 331 (RMGSPAPVYPSEPHLHTATAQ) is disordered.

The protein belongs to the TRAFAC class TrmE-Era-EngA-EngB-Septin-like GTPase superfamily. Septin GTPase family. In terms of assembly, component of the septin complex composed of two copies of each spn1, spn2, spn3 and spn4. Component of the sporulation-specific septin complex composed of at least spn2, spn5, spn6 and spn7.

The protein localises to the cytoplasm. It localises to the cell cortex. Its subcellular location is the forespore membrane. Its function is as follows. Plays a role in the cell cycle. Involved in a late stage of septum formation leading to the separation of the daughter cells. Involved in the correct orientation of forespore membrane extension during sporulation. Binds phosphatidylinositol 4-phosphate. The polypeptide is Septin homolog spn2 (spn2) (Schizosaccharomyces pombe (strain 972 / ATCC 24843) (Fission yeast)).